The sequence spans 988 residues: Next to BRCA1 gene 1 protein (988 aa).

Positions 4–86 constitute a PB1 domain; the sequence is QVTLNVTFKN…NQLQMQVHEG (83 aa). The residue at position 117 (serine 117) is a Phosphoserine. A disordered region spans residues 126–150; that stretch reads MKTTEEPAPEQCSSAPCDTDQPQDK. A ZZ-type zinc finger spans residues 213 to 265; sequence SWHIACSHCQKRIVGVRYQCSLCPSYNICEDCEAGPYTHDTNHVLLKLRRPVV. Zn(2+) contacts are provided by cysteine 218, cysteine 221, cysteine 232, cysteine 235, cysteine 241, cysteine 244, histidine 251, and histidine 255. ATG8 family proteins-binding regions lie at residues 543-637 and 745-756; these read ASER…PASV and ASSEDYIIILPE. Threonine 587 carries the post-translational modification Phosphothreonine. Phosphoserine is present on residues serine 591, serine 597, and serine 626. A disordered region spans residues 611 to 644; sequence ESEGAGFKAPPDSTVSAKRKAETPASVEETEEDL. 2 disordered regions span residues 768 to 822 and 841 to 900; these read MYSS…TSQP and RSAP…HHNG. Over residues 795–807 the composition is skewed to basic and acidic residues; sequence TEARERLPERESQ. Residues 808–822 show a composition bias toward polar residues; that stretch reads PQEQSISDILTTSQP. Serine 860 bears the Phosphoserine mark. In terms of domain architecture, UBA spans 935–979; that stretch reads SEDQTTALMAHLFEMGFCDRQLNLRLLRKHNYNILQVVTELLQVN.

As to quaternary structure, homooligomer and heterooligomer. Interacts with TRIM55. Interacts with titin/TTN. Interacts with RNF29, USP8, MAP1LC3A, MAP1LC3B, MAP1LC3C, GABARAP, GABARAPL1 and GABARAPL2. Binds to ubiquitin and ubiquitinated proteins. Interacts with SQSTM1. Interacts with TAX1BP1. Interacts with IRF3; this interaction mediates autophagic degradation of IRF3. Interacts with IL12A and IL12B. Phosphorylated by GSK3A; this phosphorylation inhibits NBR1 involvement in the formation of ubiquitinated protein aggregates. In terms of tissue distribution, expressed in brain.

It is found in the cytoplasm. Its subcellular location is the cytoplasmic vesicle. The protein localises to the autophagosome. It localises to the lysosome. The protein resides in the myofibril. It is found in the sarcomere. Its subcellular location is the m line. Its function is as follows. Ubiquitin-binding autophagy adapter that participates in different processes including host defense or intracellular homeostasis. Possesses a double function during the selective autophagy by acting as a shuttle bringing ubiquitinated proteins to autophagosomes and also by participating in the formation of protein aggregates. Plays a role in the regulation of the innate immune response by modulating type I interferon production and targeting ubiquitinated IRF3 for autophagic degradation. In response to oxidative stress, promotes an increase in SQSTM1 levels, phosphorylation, and body formation by preventing its autophagic degradation. In turn, activates the KEAP1-NRF2/NFE2L2 antioxidant pathway. Also plays non-autophagy role by mediating the shuttle of IL-12 to late endosome for subsequent secretion. The polypeptide is Next to BRCA1 gene 1 protein (Nbr1) (Mus musculus (Mouse)).